A 74-amino-acid chain; its full sequence is Protein krueppel (74 aa).

C2H2-type zinc fingers lie at residues 1–4, 10–32, 38–60, and 66–74; these read ERTH, FECSQCHKRFTRDHHLKTHMRLH, YHCTHCDRHFVQVANLRRHLRVH, and YACELCASR.

The protein belongs to the krueppel C2H2-type zinc-finger protein family.

Its subcellular location is the nucleus. Functionally, krueppel is a gap class segmentation protein. This Euscelis plebejus (Leafhopper) protein is Protein krueppel (Kr).